We begin with the raw amino-acid sequence, 494 residues long: Lysine--tRNA ligase (494 aa).

2 residues coordinate Mg(2+): Glu-405 and Glu-412.

It belongs to the class-II aminoacyl-tRNA synthetase family. As to quaternary structure, homodimer. Requires Mg(2+) as cofactor.

It localises to the cytoplasm. The enzyme catalyses tRNA(Lys) + L-lysine + ATP = L-lysyl-tRNA(Lys) + AMP + diphosphate. The polypeptide is Lysine--tRNA ligase (lysS) (Geobacillus stearothermophilus (Bacillus stearothermophilus)).